Consider the following 155-residue polypeptide: Egg cell-secreted protein 1.5 (155 aa).

The first 32 residues, 1–32 (MATKSTSKPLLLSFLMMSYLISTFHVITVAEG), serve as a signal peptide directing secretion.

The protein belongs to the plant egg cell-secreted peptide family. In terms of tissue distribution, restricted to female reproductive tissues, specifically accumulating in storage vesicles of the unfertilized egg cell.

It is found in the cytoplasmic vesicle. The protein localises to the secreted. Functionally, involved in the regulation of gamete interactions during the double fertilization and to prevent multiple-pollen tube attraction; mediates the redistribution of the gamete fusogen HAP2/GCS1 to the cell surface after secretion upon sperm arrival. This chain is Egg cell-secreted protein 1.5 (EC1.5), found in Arabidopsis thaliana (Mouse-ear cress).